The primary structure comprises 331 residues: GTPase Obg (331 aa).

In terms of domain architecture, Obg spans 1-159 (MQFIDQARIA…RELQLELKLL (159 aa)). In terms of domain architecture, OBG-type G spans 160 to 328 (AEVGLVGLPN…LLQQVWQELG (169 aa)). GTP is bound by residues 166 to 173 (GLPNAGKS), 191 to 195 (FTTLV), 213 to 216 (DIPG), 280 to 283 (SKSE), and 309 to 311 (SAV). 2 residues coordinate Mg(2+): S173 and T193.

The protein belongs to the TRAFAC class OBG-HflX-like GTPase superfamily. OBG GTPase family. Monomer. Mg(2+) is required as a cofactor.

The protein resides in the cytoplasm. In terms of biological role, an essential GTPase which binds GTP, GDP and possibly (p)ppGpp with moderate affinity, with high nucleotide exchange rates and a fairly low GTP hydrolysis rate. Plays a role in control of the cell cycle, stress response, ribosome biogenesis and in those bacteria that undergo differentiation, in morphogenesis control. The chain is GTPase Obg from Synechococcus sp. (strain RCC307).